We begin with the raw amino-acid sequence, 120 residues long: Large ribosomal subunit protein bL17 (120 aa).

It belongs to the bacterial ribosomal protein bL17 family. Part of the 50S ribosomal subunit. Contacts protein L32.

In Mesomycoplasma hyopneumoniae (strain 7448) (Mycoplasma hyopneumoniae), this protein is Large ribosomal subunit protein bL17.